A 294-amino-acid chain; its full sequence is Lipoyl synthase (294 aa).

[4Fe-4S] cluster is bound by residues Cys-41, Cys-46, Cys-52, Cys-67, Cys-71, Cys-74, and Ser-281. The 218-residue stretch at 53–270 folds into the Radical SAM core domain; sequence FNNGTATFMI…KLESLAMGFT (218 aa).

This sequence belongs to the radical SAM superfamily. Lipoyl synthase family. [4Fe-4S] cluster serves as cofactor.

It is found in the cytoplasm. It carries out the reaction [[Fe-S] cluster scaffold protein carrying a second [4Fe-4S](2+) cluster] + N(6)-octanoyl-L-lysyl-[protein] + 2 oxidized [2Fe-2S]-[ferredoxin] + 2 S-adenosyl-L-methionine + 4 H(+) = [[Fe-S] cluster scaffold protein] + N(6)-[(R)-dihydrolipoyl]-L-lysyl-[protein] + 4 Fe(3+) + 2 hydrogen sulfide + 2 5'-deoxyadenosine + 2 L-methionine + 2 reduced [2Fe-2S]-[ferredoxin]. The protein operates within protein modification; protein lipoylation via endogenous pathway; protein N(6)-(lipoyl)lysine from octanoyl-[acyl-carrier-protein]: step 2/2. Catalyzes the radical-mediated insertion of two sulfur atoms into the C-6 and C-8 positions of the octanoyl moiety bound to the lipoyl domains of lipoate-dependent enzymes, thereby converting the octanoylated domains into lipoylated derivatives. This Baumannia cicadellinicola subsp. Homalodisca coagulata protein is Lipoyl synthase.